The primary structure comprises 483 residues: UDP-N-acetylmuramate--L-alanine ligase (483 aa).

125 to 131 (GTHGKTT) is a binding site for ATP.

This sequence belongs to the MurCDEF family.

The protein resides in the cytoplasm. The catalysed reaction is UDP-N-acetyl-alpha-D-muramate + L-alanine + ATP = UDP-N-acetyl-alpha-D-muramoyl-L-alanine + ADP + phosphate + H(+). Its pathway is cell wall biogenesis; peptidoglycan biosynthesis. Its function is as follows. Cell wall formation. The polypeptide is UDP-N-acetylmuramate--L-alanine ligase (Pseudoalteromonas translucida (strain TAC 125)).